Here is a 280-residue protein sequence, read N- to C-terminus: Large ribosomal subunit protein uL2 (280 aa).

2 disordered regions span residues 32-54 (SLLVPNKSTGGRNNNGRVTSRHM) and 221-280 (RGMA…DSKK). Polar residues predominate over residues 37–49 (NKSTGGRNNNGRV). Positions 232 to 242 (MGGGEGKSKSG) are enriched in gly residues. A compositionally biased stretch (basic residues) spans 257–280 (KGLKTRKRKKASSKLIVRRRDSKK).

Belongs to the universal ribosomal protein uL2 family. In terms of assembly, part of the 50S ribosomal subunit. Forms a bridge to the 30S subunit in the 70S ribosome.

Functionally, one of the primary rRNA binding proteins. Required for association of the 30S and 50S subunits to form the 70S ribosome, for tRNA binding and peptide bond formation. It has been suggested to have peptidyltransferase activity; this is somewhat controversial. Makes several contacts with the 16S rRNA in the 70S ribosome. The sequence is that of Large ribosomal subunit protein uL2 from Chloroherpeton thalassium (strain ATCC 35110 / GB-78).